A 292-amino-acid polypeptide reads, in one-letter code: Selenate reductase subunit B (292 aa).

Residues M1 to A43 constitute a signal peptide (tat-type signal). 4Fe-4S ferredoxin-type domains are found at residues W84–V113, V129–D160, and G161–G190. Positions 93, 96, 99, 103, 138, 141, 146, 150, 170, 173, 176, 180, 230, 233, 245, and 249 each coordinate [4Fe-4S] cluster.

In terms of assembly, the complex is composed of three subunits: SrdA, SrdB and SrdC. It depends on [4Fe-4S] cluster as a cofactor. Predicted to be exported by the Tat system. The position of the signal peptide cleavage has not been experimentally proven.

The protein resides in the secreted. It catalyses the reaction selenite + a quinone + H2O = selenate + a quinol. Component of the respiratory selenate reductase complex, which catalyzes the reduction of selenate to selenite. This subunit probably transfers electrons from SrdC to SrdA. The chain is Selenate reductase subunit B from Mesobacillus selenatarsenatis (strain DSM 18680 / JCM 14380 / FERM P-15431 / SF-1).